Here is a 342-residue protein sequence, read N- to C-terminus: S-adenosylmethionine:tRNA ribosyltransferase-isomerase (342 aa).

This sequence belongs to the QueA family. Monomer.

It localises to the cytoplasm. The enzyme catalyses 7-aminomethyl-7-carbaguanosine(34) in tRNA + S-adenosyl-L-methionine = epoxyqueuosine(34) in tRNA + adenine + L-methionine + 2 H(+). It participates in tRNA modification; tRNA-queuosine biosynthesis. Transfers and isomerizes the ribose moiety from AdoMet to the 7-aminomethyl group of 7-deazaguanine (preQ1-tRNA) to give epoxyqueuosine (oQ-tRNA). The polypeptide is S-adenosylmethionine:tRNA ribosyltransferase-isomerase (Streptococcus pneumoniae (strain ATCC BAA-255 / R6)).